An 83-amino-acid chain; its full sequence is Large ribosomal subunit protein bL27 (83 aa).

A disordered region spans residues 1-22 (MAHKKGQGSTRNGRDSHSKRLG).

The protein belongs to the bacterial ribosomal protein bL27 family.

In Protochlamydia amoebophila (strain UWE25), this protein is Large ribosomal subunit protein bL27.